Here is a 342-residue protein sequence, read N- to C-terminus: Holliday junction branch migration complex subunit RuvB (342 aa).

A large ATPase domain (RuvB-L) region spans residues 1-179; the sequence is MTSILSPEKS…FGIPMRLNFY (179 aa). ATP is bound by residues leucine 18, arginine 19, glycine 60, lysine 63, threonine 64, threonine 65, 126–128, arginine 169, tyrosine 179, and arginine 216; that span reads EDF. Threonine 64 contributes to the Mg(2+) binding site. The interval 180–250 is small ATPAse domain (RuvB-S); that stretch reads NTEELKKVLN…IANFGLNRLE (71 aa). A head domain (RuvB-H) region spans residues 253 to 342; the sequence is IIGLDSNDYR…HQFNIFNDNE (90 aa). Residues arginine 289, arginine 308, and arginine 313 each coordinate DNA.

The protein belongs to the RuvB family. Homohexamer. Forms an RuvA(8)-RuvB(12)-Holliday junction (HJ) complex. HJ DNA is sandwiched between 2 RuvA tetramers; dsDNA enters through RuvA and exits via RuvB. An RuvB hexamer assembles on each DNA strand where it exits the tetramer. Each RuvB hexamer is contacted by two RuvA subunits (via domain III) on 2 adjacent RuvB subunits; this complex drives branch migration. In the full resolvosome a probable DNA-RuvA(4)-RuvB(12)-RuvC(2) complex forms which resolves the HJ.

It localises to the cytoplasm. The catalysed reaction is ATP + H2O = ADP + phosphate + H(+). The RuvA-RuvB-RuvC complex processes Holliday junction (HJ) DNA during genetic recombination and DNA repair, while the RuvA-RuvB complex plays an important role in the rescue of blocked DNA replication forks via replication fork reversal (RFR). RuvA specifically binds to HJ cruciform DNA, conferring on it an open structure. The RuvB hexamer acts as an ATP-dependent pump, pulling dsDNA into and through the RuvAB complex. RuvB forms 2 homohexamers on either side of HJ DNA bound by 1 or 2 RuvA tetramers; 4 subunits per hexamer contact DNA at a time. Coordinated motions by a converter formed by DNA-disengaged RuvB subunits stimulates ATP hydrolysis and nucleotide exchange. Immobilization of the converter enables RuvB to convert the ATP-contained energy into a lever motion, pulling 2 nucleotides of DNA out of the RuvA tetramer per ATP hydrolyzed, thus driving DNA branch migration. The RuvB motors rotate together with the DNA substrate, which together with the progressing nucleotide cycle form the mechanistic basis for DNA recombination by continuous HJ branch migration. Branch migration allows RuvC to scan DNA until it finds its consensus sequence, where it cleaves and resolves cruciform DNA. This chain is Holliday junction branch migration complex subunit RuvB, found in Rickettsia bellii (strain RML369-C).